We begin with the raw amino-acid sequence, 84 residues long: Apoptosis inhibitor Rv3654c (84 aa).

The N-terminal stretch at 1–39 (MVARHRAQAAADLASLAAAARLPSGLAAACARATLVARA) is a signal peptide.

As to quaternary structure, interacts with human polypyrimidine tract binding protein-associated splicing factor (PSF).

The protein localises to the secreted. Its subcellular location is the host cytoplasm. Its function is as follows. Effector protein that participates in the suppression of macrophage apoptosis by blocking the extrinsic pathway. Recognizes the host polypyrimidine tract binding protein-associated splicing factor (PSF), which probably leads to its cleavage, diminishing the level of caspase-8 in macrophages. This chain is Apoptosis inhibitor Rv3654c, found in Mycobacterium tuberculosis (strain ATCC 25618 / H37Rv).